Consider the following 387-residue polypeptide: Phosphoglycerate kinase (387 aa).

Substrate-binding positions include 21–23 (DLN), Arg-36, and 59–62 (HLGR). Lys-84 is modified (N6-acetyllysine). Positions 113 and 146 each coordinate substrate. ATP-binding positions include Lys-197, Glu-314, and 340 to 343 (GGDT).

Belongs to the phosphoglycerate kinase family. In terms of assembly, monomer.

The protein resides in the cytoplasm. It catalyses the reaction (2R)-3-phosphoglycerate + ATP = (2R)-3-phospho-glyceroyl phosphate + ADP. It functions in the pathway carbohydrate degradation; glycolysis; pyruvate from D-glyceraldehyde 3-phosphate: step 2/5. This chain is Phosphoglycerate kinase, found in Shigella sonnei (strain Ss046).